Reading from the N-terminus, the 1182-residue chain is uncharacterized protein (1182 aa).

The chain crosses the membrane as a helical span at residues 618-638 (GSSSLVCSVMVVIFSIILYYL).

The protein localises to the host membrane. This is an uncharacterized protein from Callospermophilus lateralis (Golden-mantled ground squirrel).